The sequence spans 260 residues: Sulfoquinovose 1-dehydrogenase (260 aa).

Y160 (proton acceptor) is an active-site residue.

It belongs to the short-chain dehydrogenases/reductases (SDR) family.

The enzyme catalyses 6-sulfo-D-quinovose + NAD(+) = 6-deoxy-6-sulfo-D-glucono-1,5-lactone + NADH + H(+). Functionally, catalyzes the oxidation of sulfoquinovose to 6-deoxy-6-sulfo-D-glucono-1,5-lactone, with a strong preference for NAD(+) as the electron acceptor. Is involved in a degradation pathway of sulfoquinovose (SQ) that allows P.putida SQ1 to use SQ as the sole carbon and energy source for growth. This is Sulfoquinovose 1-dehydrogenase from Pseudomonas putida (Arthrobacter siderocapsulatus).